Consider the following 204-residue polypeptide: MELKIVNPGGAQGTVNVSEVAFGREFNQDLVHQAVVAYMAGARQGTKAQKTRAEVSGGGKKPWRQKGTGRARAGTIRSPIWRGGGVTFAAKPRDFEQKLNRKMYRAALQCILSELNRQDRLIVVESFDVDAPKTKALVQKLAQYDLTDALIVTEDLSENLYLASRNLHKVGVSDVQGVDPVSLIGYDKVVVTVPALKKFEEILG.

The segment at 47-69 (KAQKTRAEVSGGGKKPWRQKGTG) is disordered.

It belongs to the universal ribosomal protein uL4 family. As to quaternary structure, part of the 50S ribosomal subunit.

One of the primary rRNA binding proteins, this protein initially binds near the 5'-end of the 23S rRNA. It is important during the early stages of 50S assembly. It makes multiple contacts with different domains of the 23S rRNA in the assembled 50S subunit and ribosome. Functionally, forms part of the polypeptide exit tunnel. In Cellvibrio japonicus (strain Ueda107) (Pseudomonas fluorescens subsp. cellulosa), this protein is Large ribosomal subunit protein uL4.